A 90-amino-acid polypeptide reads, in one-letter code: Probable Fe(2+)-trafficking protein (90 aa).

The protein belongs to the Fe(2+)-trafficking protein family. Monomer.

Its function is as follows. Could be a mediator in iron transactions between iron acquisition and iron-requiring processes, such as synthesis and/or repair of Fe-S clusters in biosynthetic enzymes. The protein is Probable Fe(2+)-trafficking protein of Yersinia pseudotuberculosis serotype O:1b (strain IP 31758).